Reading from the N-terminus, the 337-residue chain is 4-hydroxy-3-methylbut-2-enyl diphosphate reductase (337 aa).

Cys38 is a binding site for [4Fe-4S] cluster. The (2E)-4-hydroxy-3-methylbut-2-enyl diphosphate site is built by His67 and His100. The dimethylallyl diphosphate site is built by His67 and His100. Positions 67 and 100 each coordinate isopentenyl diphosphate. Position 122 (Cys122) interacts with [4Fe-4S] cluster. Residue His150 coordinates (2E)-4-hydroxy-3-methylbut-2-enyl diphosphate. His150 serves as a coordination point for dimethylallyl diphosphate. His150 is an isopentenyl diphosphate binding site. Catalysis depends on Glu152, which acts as the Proton donor. A (2E)-4-hydroxy-3-methylbut-2-enyl diphosphate-binding site is contributed by Thr190. Cys220 contributes to the [4Fe-4S] cluster binding site. (2E)-4-hydroxy-3-methylbut-2-enyl diphosphate is bound by residues Ser248, Ser249, Asn250, and Ser293. Positions 248, 249, 250, and 293 each coordinate dimethylallyl diphosphate. Positions 248, 249, 250, and 293 each coordinate isopentenyl diphosphate.

This sequence belongs to the IspH family. Requires [4Fe-4S] cluster as cofactor.

The catalysed reaction is isopentenyl diphosphate + 2 oxidized [2Fe-2S]-[ferredoxin] + H2O = (2E)-4-hydroxy-3-methylbut-2-enyl diphosphate + 2 reduced [2Fe-2S]-[ferredoxin] + 2 H(+). It carries out the reaction dimethylallyl diphosphate + 2 oxidized [2Fe-2S]-[ferredoxin] + H2O = (2E)-4-hydroxy-3-methylbut-2-enyl diphosphate + 2 reduced [2Fe-2S]-[ferredoxin] + 2 H(+). It participates in isoprenoid biosynthesis; dimethylallyl diphosphate biosynthesis; dimethylallyl diphosphate from (2E)-4-hydroxy-3-methylbutenyl diphosphate: step 1/1. It functions in the pathway isoprenoid biosynthesis; isopentenyl diphosphate biosynthesis via DXP pathway; isopentenyl diphosphate from 1-deoxy-D-xylulose 5-phosphate: step 6/6. In terms of biological role, catalyzes the conversion of 1-hydroxy-2-methyl-2-(E)-butenyl 4-diphosphate (HMBPP) into a mixture of isopentenyl diphosphate (IPP) and dimethylallyl diphosphate (DMAPP). Acts in the terminal step of the DOXP/MEP pathway for isoprenoid precursor biosynthesis. The sequence is that of 4-hydroxy-3-methylbut-2-enyl diphosphate reductase from Mycolicibacterium vanbaalenii (strain DSM 7251 / JCM 13017 / BCRC 16820 / KCTC 9966 / NRRL B-24157 / PYR-1) (Mycobacterium vanbaalenii).